The primary structure comprises 368 residues: Probable leucine aminopeptidase TRV_05750 (368 aa).

The N-terminal stretch at 1-18 (MKVFAIAAVAALTAVAVA) is a signal peptide. The N-linked (GlcNAc...) asparagine glycan is linked to N92. Zn(2+)-binding residues include H172 and D191. N-linked (GlcNAc...) asparagine glycans are attached at residues N192 and N216. 2 residues coordinate Zn(2+): E230 and D257. C301 and C305 are oxidised to a cystine. H334 contacts Zn(2+).

The protein belongs to the peptidase M28 family. M28E subfamily. Monomer. Requires Zn(2+) as cofactor.

The protein resides in the secreted. Functionally, probable extracellular aminopeptidase which contributes to pathogenicity. The protein is Probable leucine aminopeptidase TRV_05750 of Trichophyton verrucosum (strain HKI 0517).